Here is a 232-residue protein sequence, read N- to C-terminus: LexA repressor (232 aa).

Positions 26-46 (FDEMKDALDLRSKSGIHRLIT) form a DNA-binding region, H-T-H motif. Active-site for autocatalytic cleavage activity residues include Ser-153 and Lys-191.

It belongs to the peptidase S24 family. As to quaternary structure, homodimer.

It catalyses the reaction Hydrolysis of Ala-|-Gly bond in repressor LexA.. Represses a number of genes involved in the response to DNA damage (SOS response), including recA and lexA. In the presence of single-stranded DNA, RecA interacts with LexA causing an autocatalytic cleavage which disrupts the DNA-binding part of LexA, leading to derepression of the SOS regulon and eventually DNA repair. This chain is LexA repressor, found in Afipia carboxidovorans (strain ATCC 49405 / DSM 1227 / KCTC 32145 / OM5) (Oligotropha carboxidovorans).